The chain runs to 158 residues: Regulator of sigma D (158 aa).

Belongs to the Rsd/AlgQ family. Interacts with RpoD.

It is found in the cytoplasm. Its function is as follows. Binds RpoD and negatively regulates RpoD-mediated transcription activation by preventing the interaction between the primary sigma factor RpoD with the catalytic core of the RNA polymerase and with promoter DNA. May be involved in replacement of the RNA polymerase sigma subunit from RpoD to RpoS during the transition from exponential growth to the stationary phase. This Escherichia coli O127:H6 (strain E2348/69 / EPEC) protein is Regulator of sigma D.